A 244-amino-acid polypeptide reads, in one-letter code: tRNA (guanine-N(1)-)-methyltransferase (244 aa).

Residues G113 and 133–138 (IGDYVL) each bind S-adenosyl-L-methionine.

This sequence belongs to the RNA methyltransferase TrmD family. In terms of assembly, homodimer.

It is found in the cytoplasm. It catalyses the reaction guanosine(37) in tRNA + S-adenosyl-L-methionine = N(1)-methylguanosine(37) in tRNA + S-adenosyl-L-homocysteine + H(+). In terms of biological role, specifically methylates guanosine-37 in various tRNAs. The polypeptide is tRNA (guanine-N(1)-)-methyltransferase (Bacillus anthracis (strain A0248)).